We begin with the raw amino-acid sequence, 482 residues long: Beta-1,3-glucan-binding protein 2 (482 aa).

An N-terminal signal peptide occupies residues 1-18; sequence MWIKSVCLFATIAGCLGQ. A CBM39 domain is found at 23 to 122; the sequence is YKVPDAKLEA…GEWTVTEFVN (100 aa). Asn-124 is a glycosylation site (N-linked (GlcNAc...) asparagine). A disordered region spans residues 127 to 153; that stretch reads VVDTSTAPPPVAPAVSEEDQSPGPQWR. The 355-residue stretch at 128–482 folds into the GH16 domain; the sequence is VDTSTAPPPV…KVDYVRVYAL (355 aa). N-linked (GlcNAc...) asparagine glycosylation is present at Asn-189.

In terms of assembly, monomer. Post-translationally, N-glycosylated. Cuticle and fat body.

The protein resides in the secreted. Functionally, involved in the recognition of invading microorganisms. Binds specifically to beta-1,3-glucan and lipoteichoic acid and causes aggregation of invading microorganisms. Binding to beta-1,3-glucan activates the phenoloxidase cascade. This is Beta-1,3-glucan-binding protein 2 from Manduca sexta (Tobacco hawkmoth).